The following is a 527-amino-acid chain: Mitogen-activated protein kinase kinae MKK2 (527 aa).

2 disordered regions span residues 1–143 and 156–189; these read MHDQ…SAGS and IGST…DKDG. Residues 107–129 show a composition bias toward low complexity; sequence QQGQSASGGSESSAAHSRSGSFG. Residues 134-143 show a composition bias toward polar residues; it reads RTSNPTSAGS. The span at 177–189 shows a compositional bias: basic and acidic residues; it reads ERSDGGAGMDKDG. The region spanning 227–497 is the Protein kinase domain; it reads IVELGGLGEG…PWRMLEHPWM (271 aa). ATP-binding positions include 233–241 and Lys-256; that span reads LGEGAGGAV.

It belongs to the protein kinase superfamily. STE Ser/Thr protein kinase family. MAP kinase kinase subfamily. In terms of assembly, interacts with the adapter protein MST50.

The catalysed reaction is L-seryl-[protein] + ATP = O-phospho-L-seryl-[protein] + ADP + H(+). The enzyme catalyses L-threonyl-[protein] + ATP = O-phospho-L-threonyl-[protein] + ADP + H(+). In terms of biological role, mitogen-activated protein kinase kinase; part of the MCK1-MKK2-MPS1 MAP kinase (MAPK) signal transduction cascade that is essential for appressorium formation, penetration and invasive growth. Beside its role in pathogenesis, the MPS1 cascade is active in conidiation and cellular stress responses. Targets downstream of the the MPS1-MAPK pathway include transcription factors MIG1 and SWI6, as well as GSK1 and MPG1. This chain is Mitogen-activated protein kinase kinae MKK2, found in Pyricularia oryzae (strain 70-15 / ATCC MYA-4617 / FGSC 8958) (Rice blast fungus).